Consider the following 280-residue polypeptide: Dehydrogenase/reductase SDR family member 2, mitochondrial (280 aa).

The transit peptide at 1 to 23 (MLSAVARGYQGWFHPCARLSVRM) directs the protein to the mitochondrion. NAD(+)-binding residues include Ser46 and Ile48. Lys96 carries the post-translational modification N6-acetyllysine; alternate. Lys96 bears the N6-succinyllysine; alternate mark. Ser172 contacts substrate. NAD(+) is bound by residues Tyr185 and Lys189. Tyr185 acts as the Proton acceptor in catalysis. Lys219 is subject to N6-acetyllysine; alternate. The residue at position 219 (Lys219) is an N6-succinyllysine; alternate. Residue Thr220 participates in NAD(+) binding. Position 223 is a phosphoserine (Ser223). An N6-succinyllysine modification is found at Lys237.

It belongs to the short-chain dehydrogenases/reductases (SDR) family. In terms of assembly, directly interacts with MDM2; this interaction occurs in the nucleus and does not target DHRS2 to degradation. In terms of tissue distribution, widely expressed, with highest levels in liver and kidney, followed by heart, spleen, skeletal muscle and placenta. In hemopoietic cells, expressed in dendritic cells, but not in monocytes, macrophages, granulocytes, nor in B and T lymphocytes.

The protein localises to the mitochondrion matrix. It localises to the nucleus. Its function is as follows. NADPH-dependent oxidoreductase which catalyzes the reduction of dicarbonyl compounds. Displays reductase activity in vitro with 3,4-hexanedione, 2,3-heptanedione and 1-phenyl-1,2-propanedione as substrates. May function as a dicarbonyl reductase in the enzymatic inactivation of reactive carbonyls involved in covalent modification of cellular components. Also displays a minor hydroxysteroid dehydrogenase activity toward bile acids such as ursodeoxycholic acid (UDCA) and isoursodeoxycholic acid (isoUDCA), which makes it unlikely to control hormone levels. Doesn't show any activity in vitro with retinoids and sugars as substrates. Attenuates MDM2-mediated p53/TP53 degradation, leading to p53/TP53 stabilization and increased transcription activity, resulting in the accumulation of MDM2 and CDKN1A/p21. Reduces proliferation, migration and invasion of cancer cells and well as the production of ROS in cancer. This is Dehydrogenase/reductase SDR family member 2, mitochondrial from Homo sapiens (Human).